The sequence spans 234 residues: Immune-associated nucleotide-binding protein 2 (234 aa).

Residues 21–223 (KPVKNIVLVG…YTEDMYRNIK (203 aa)) enclose the AIG1-type G domain. Residues 30–38 (GRSVNGICT), Ser-51, and Asn-183 contribute to the GTP site.

The protein belongs to the TRAFAC class TrmE-Era-EngA-EngB-Septin-like GTPase superfamily. AIG1/Toc34/Toc159-like paraseptin GTPase family. IAN subfamily. As to expression, mostly expressed in pollen. Also detected in lateral roots and radicles.

The chain is Immune-associated nucleotide-binding protein 2 from Arabidopsis thaliana (Mouse-ear cress).